Reading from the N-terminus, the 225-residue chain is ATP-dependent dethiobiotin synthetase BioD (225 aa).

Residue 12–17 (GVGKTV) coordinates ATP. Residue Thr16 participates in Mg(2+) binding. Residue Lys37 is part of the active site. Thr41 provides a ligand contact to substrate. ATP contacts are provided by residues Asp46, 105–108 (EGAG), 166–167 (GS), and 196–198 (PEG). The Mg(2+) site is built by Asp46 and Glu105.

It belongs to the dethiobiotin synthetase family. As to quaternary structure, homodimer. It depends on Mg(2+) as a cofactor.

Its subcellular location is the cytoplasm. It catalyses the reaction (7R,8S)-7,8-diammoniononanoate + CO2 + ATP = (4R,5S)-dethiobiotin + ADP + phosphate + 3 H(+). It participates in cofactor biosynthesis; biotin biosynthesis; biotin from 7,8-diaminononanoate: step 1/2. Catalyzes a mechanistically unusual reaction, the ATP-dependent insertion of CO2 between the N7 and N8 nitrogen atoms of 7,8-diaminopelargonic acid (DAPA, also called 7,8-diammoniononanoate) to form a ureido ring. The sequence is that of ATP-dependent dethiobiotin synthetase BioD from Mycobacteroides abscessus (strain ATCC 19977 / DSM 44196 / CCUG 20993 / CIP 104536 / JCM 13569 / NCTC 13031 / TMC 1543 / L948) (Mycobacterium abscessus).